The following is a 238-amino-acid chain: 2-C-methyl-D-erythritol 4-phosphate cytidylyltransferase (238 aa).

It belongs to the IspD/TarI cytidylyltransferase family. IspD subfamily.

It carries out the reaction 2-C-methyl-D-erythritol 4-phosphate + CTP + H(+) = 4-CDP-2-C-methyl-D-erythritol + diphosphate. It functions in the pathway isoprenoid biosynthesis; isopentenyl diphosphate biosynthesis via DXP pathway; isopentenyl diphosphate from 1-deoxy-D-xylulose 5-phosphate: step 2/6. Catalyzes the formation of 4-diphosphocytidyl-2-C-methyl-D-erythritol from CTP and 2-C-methyl-D-erythritol 4-phosphate (MEP). The protein is 2-C-methyl-D-erythritol 4-phosphate cytidylyltransferase of Leptospira interrogans serogroup Icterohaemorrhagiae serovar copenhageni (strain Fiocruz L1-130).